The chain runs to 81 residues: Large ribosomal subunit protein bL31B (81 aa).

The protein belongs to the bacterial ribosomal protein bL31 family. Type B subfamily. Part of the 50S ribosomal subunit.

In Bacillus cereus (strain G9842), this protein is Large ribosomal subunit protein bL31B.